The following is a 160-amino-acid chain: Competence protein ComGD (160 aa).

Residues 30-50 (AFTMLESLLVLGLVSILALGL) traverse the membrane as a helical segment.

As to quaternary structure, the transformation pili are flexible filaments, consisting mainly of the major pilin ComGC and smaller amounts of the minor pilins, including at least ComGD, ComGF and ComGG, and perhaps ComGE. Interacts with ComGE. Interacts with ComGF. Interacts with ComGG.

Its subcellular location is the cell membrane. It localises to the cell surface. The protein resides in the fimbrium. Required for formation of the type IV-like pilus (T4P) that plays a role in transformation. Transformation pili are dynamically extended and retracted, perhaps thereby promoting DNA uptake and transformation. Involved in transformation. Required for DNA binding. The polypeptide is Competence protein ComGD (Streptococcus pneumoniae (strain ATCC BAA-255 / R6)).